Here is a 513-residue protein sequence, read N- to C-terminus: Exoglucanase 1 (513 aa).

The N-terminal stretch at 1 to 17 is a signal peptide; sequence MYRKLAVISAFLATARA. A Pyrrolidone carboxylic acid modification is found at Gln18. The segment at 18 to 453 is catalytic; sequence QSACTLQSET…GSTGNPSGGN (436 aa). 10 disulfides stabilise this stretch: Cys21–Cys89, Cys36–Cys42, Cys67–Cys88, Cys78–Cys84, Cys155–Cys414, Cys189–Cys227, Cys193–Cys226, Cys247–Cys273, Cys255–Cys260, and Cys278–Cys348. Asn62 carries an N-linked (GlcNAc) asparagine glycan. Glu229 (nucleophile) is an active-site residue. Glu234 acts as the Proton donor/acceptor in catalysis. N-linked (GlcNAc) asparagine glycans are attached at residues Asn287 and Asn401. Over residues 401 to 437 the composition is skewed to polar residues; that stretch reads NETSSTPGAVRGSCSTSSGVPAQVESQSPNAKVTFSN. Residues 401-480 form a disordered region; that stretch reads NETSSTPGAV…TGSSPGPTQS (80 aa). Residues 449–459 show a composition bias toward gly residues; sequence PSGGNPPGGNR. The interval 454–477 is linker; that stretch reads PPGGNRGTTTTRRPATTTGSSPGP. Positions 460–478 are enriched in low complexity; it reads GTTTTRRPATTTGSSPGPT. Thr461 is a glycosylation site (O-linked (Man) threonine). O-linked (Man...) threonine glycosylation is found at Thr462, Thr463, and Thr464. An O-linked (Man) threonine glycan is attached at Thr469. Thr470 and Thr471 each carry an O-linked (Man...) threonine glycan. Ser473 and Ser474 each carry an O-linked (Man) serine glycan. The region spanning 477 to 513 is the CBM1 domain; it reads PTQSHYGQCGGIGYSGPTVCASGTTCQVLNPYYSQCL. Thr478 carries an O-linked (Man) threonine glycan. O-linked (Man) serine glycosylation is found at Ser480 and Ser491. Disulfide bonds link Cys485–Cys502 and Cys496–Cys512.

This sequence belongs to the glycosyl hydrolase 7 (cellulase C) family. N-glycosylated. The catalytic core domain comprises three N-linked glycans which each consist of a single N-acetylglucosamine residue. In terms of processing, O-glycosylated. Within the linker domain, all 8 threonines are variably glycosylated with between at least one, and up to three, mannose residues per site. All serines in this domain are at least partially glycosylated with a single mannose residue. O-glycosylation of the cellulase linker provides protection from proteolysis. Linker glycans also contribute to binding affinity of cellobiohydrolases to cellulose.

The protein resides in the secreted. The catalysed reaction is Hydrolysis of (1-&gt;4)-beta-D-glucosidic linkages in cellulose and cellotetraose, releasing cellobiose from the non-reducing ends of the chains.. Exocellobiohydrolases (CBH) that catalyzes the hydrolysis of 1,4-beta-D-glucosidic bonds in cellulose to release the disaccharide cellobiose. The degradation of cellulose involves an interplay between different cellulolytic enzymes. Hydrolysis starts with endoglucanases (EGs), which cut internal beta-1,4-glucosidic bonds in cellulose to reduce the polymerization degree of the substrate and create new chain ends for exocellobiohydrolases (CBHs). The CBHs release the disaccharide cellobiose from the non-reducing end of the cellulose polymer chain. Finally, beta-1,4-glucosidases hydrolyze the cellobiose and other short cello-oligosaccharides into glucose units. In Hypocrea jecorina (Trichoderma reesei), this protein is Exoglucanase 1 (cbh1).